The following is a 607-amino-acid chain: Chaperone protein DnaK (607 aa).

Position 173 is a phosphothreonine; by autocatalysis (T173). The span at 577–588 shows a compositional bias: low complexity; it reads AQAQQGAEGAAS. A disordered region spans residues 577-607; it reads AQAQQGAEGAASQDDDVVDADFTEVKDDDNK. The segment covering 589 to 598 has biased composition (acidic residues); that stretch reads QDDDVVDADF.

Belongs to the heat shock protein 70 family.

In terms of biological role, acts as a chaperone. This chain is Chaperone protein DnaK, found in Macrococcus caseolyticus (strain JCSC5402) (Macrococcoides caseolyticum).